Reading from the N-terminus, the 246-residue chain is Octanoyltransferase (246 aa).

In terms of domain architecture, BPL/LPL catalytic spans 46 to 234 (GTAGEMVWLV…AFEEVFGAAE (189 aa)). Substrate is bound by residues 85–92 (RGGEYTYH), 165–167 (AIG), and 178–180 (GIA). Catalysis depends on C196, which acts as the Acyl-thioester intermediate.

This sequence belongs to the LipB family.

It localises to the cytoplasm. The enzyme catalyses octanoyl-[ACP] + L-lysyl-[protein] = N(6)-octanoyl-L-lysyl-[protein] + holo-[ACP] + H(+). It functions in the pathway protein modification; protein lipoylation via endogenous pathway; protein N(6)-(lipoyl)lysine from octanoyl-[acyl-carrier-protein]: step 1/2. In terms of biological role, catalyzes the transfer of endogenously produced octanoic acid from octanoyl-acyl-carrier-protein onto the lipoyl domains of lipoate-dependent enzymes. Lipoyl-ACP can also act as a substrate although octanoyl-ACP is likely to be the physiological substrate. This chain is Octanoyltransferase, found in Chelativorans sp. (strain BNC1).